We begin with the raw amino-acid sequence, 290 residues long: Ribonuclease HIII (290 aa).

The RNase H type-2 domain occupies 78–290; that stretch reads LPLIGTDEVG…FKNTEKAKNA (213 aa). A divalent metal cation contacts are provided by Asp-84, Glu-85, and Asp-187.

It belongs to the RNase HII family. RnhC subfamily. The cofactor is Mn(2+). Requires Mg(2+) as cofactor.

It localises to the cytoplasm. It carries out the reaction Endonucleolytic cleavage to 5'-phosphomonoester.. In terms of biological role, endonuclease that specifically degrades the RNA of RNA-DNA hybrids. This Streptococcus pneumoniae (strain P1031) protein is Ribonuclease HIII.